The primary structure comprises 296 residues: 5,10-methylenetetrahydrofolate reductase (296 aa).

Residue Glu28 is the Proton donor/acceptor of the active site. Thr59 is an NADH binding site. Positions 60, 62, 88, 118, 119, 120, 132, 152, 156, 159, 165, 168, 171, and 172 each coordinate FAD. A (6S)-5-methyl-5,6,7,8-tetrahydrofolate-binding site is contributed by Asp120. Gln183 is a binding site for NADH. 3 residues coordinate (6S)-5-methyl-5,6,7,8-tetrahydrofolate: Gln183, Gln219, and Arg279.

This sequence belongs to the methylenetetrahydrofolate reductase family. It depends on FAD as a cofactor.

The enzyme catalyses (6S)-5-methyl-5,6,7,8-tetrahydrofolate + NAD(+) = (6R)-5,10-methylene-5,6,7,8-tetrahydrofolate + NADH + H(+). It participates in one-carbon metabolism; tetrahydrofolate interconversion. Its pathway is amino-acid biosynthesis; L-methionine biosynthesis via de novo pathway. In terms of biological role, catalyzes the NADH-dependent reduction of 5,10-methylenetetrahydrofolate to 5-methyltetrahydrofolate. Is required to provide the methyl group necessary for methionine synthetase to convert homocysteine to methionine; the methyl group is given by 5-methyltetrahydrofolate. The protein is 5,10-methylenetetrahydrofolate reductase (metF) of Salmonella typhimurium (strain LT2 / SGSC1412 / ATCC 700720).